We begin with the raw amino-acid sequence, 316 residues long: MSYDSLMVFTGTANPKLAHDVVKYLNINLGRANVGRFSDGEVMVEILENVRGNDVFVLQSTCTPTNDSLMEILVIVDALKRASASRVTAAIPYFGYARQDRRTRSARVPITAKVVANMLTSVGVDRVLTMDLHSDQIQGFFDIPVDNVYGMPILLGDIWKHDYQNLIVVSPDVGGVVRARHLAKRLECDLAIIDKRRPKPNESKVMNIIGDVRGRTCVIIDDMVDTANTLCEAASALKREGAASVIAYSTHAVLSGKAVERVQTSDLDKLVVTDTIPLREDASKCNRIHQLSVASLLGESMLRISNESSLSSLFIE.

ATP contacts are provided by residues D39–E41 and R98–Q99. The Mg(2+) site is built by H133 and D172. K195 is an active-site residue. Residues R197, D221, and D225–T229 contribute to the D-ribose 5-phosphate site.

This sequence belongs to the ribose-phosphate pyrophosphokinase family. Class I subfamily. As to quaternary structure, homohexamer. Mg(2+) serves as cofactor.

It is found in the cytoplasm. The enzyme catalyses D-ribose 5-phosphate + ATP = 5-phospho-alpha-D-ribose 1-diphosphate + AMP + H(+). Its pathway is metabolic intermediate biosynthesis; 5-phospho-alpha-D-ribose 1-diphosphate biosynthesis; 5-phospho-alpha-D-ribose 1-diphosphate from D-ribose 5-phosphate (route I): step 1/1. Functionally, involved in the biosynthesis of the central metabolite phospho-alpha-D-ribosyl-1-pyrophosphate (PRPP) via the transfer of pyrophosphoryl group from ATP to 1-hydroxyl of ribose-5-phosphate (Rib-5-P). The chain is Ribose-phosphate pyrophosphokinase from Nitrosomonas europaea (strain ATCC 19718 / CIP 103999 / KCTC 2705 / NBRC 14298).